Here is an 862-residue protein sequence, read N- to C-terminus: Linoleate 9S-lipoxygenase 1 (862 aa).

Residues Phe-44–Ala-171 enclose the PLAT domain. One can recognise a Lipoxygenase domain in the interval Thr-174–Ile-862. Residues Lys-225–Cys-257 are disordered. Over residues Arg-242–Thr-251 the composition is skewed to basic residues. Fe cation contacts are provided by His-522, His-527, His-713, Asn-717, and Ile-862.

It belongs to the lipoxygenase family. Monomer. The cofactor is Fe cation.

The protein resides in the cytoplasm. It catalyses the reaction (9Z,12Z)-octadecadienoate + O2 = (13S)-hydroperoxy-(9Z,11E)-octadecadienoate. The catalysed reaction is (9Z,12Z,15Z)-octadecatrienoate + O2 = (13S)-hydroperoxy-(9Z,11E,15Z)-octadecatrienoate. The enzyme catalyses (9Z,12Z)-octadecadienoate + O2 = (9S)-hydroperoxy-(10E,12Z)-octadecadienoate. The protein operates within lipid metabolism; oxylipin biosynthesis. Functionally, plant lipoxygenase may be involved in a number of diverse aspects of plant physiology including growth and development, pest resistance, and senescence or responses to wounding. It catalyzes the hydroperoxidation of lipids containing a cis,cis-1,4-pentadiene structure. In Phaseolus vulgaris (Kidney bean), this protein is Linoleate 9S-lipoxygenase 1 (LOXA).